The primary structure comprises 279 residues: 3-methyl-2-oxobutanoate hydroxymethyltransferase (279 aa).

The Mg(2+) site is built by D43 and D82. Residues 43 to 44 (DS), D82, and K112 contribute to the 3-methyl-2-oxobutanoate site. Position 114 (E114) interacts with Mg(2+). The Proton acceptor role is filled by E181.

It belongs to the PanB family. In terms of assembly, homodecamer; pentamer of dimers. The cofactor is Mg(2+).

Its subcellular location is the cytoplasm. The enzyme catalyses 3-methyl-2-oxobutanoate + (6R)-5,10-methylene-5,6,7,8-tetrahydrofolate + H2O = 2-dehydropantoate + (6S)-5,6,7,8-tetrahydrofolate. It functions in the pathway cofactor biosynthesis; (R)-pantothenate biosynthesis; (R)-pantoate from 3-methyl-2-oxobutanoate: step 1/2. Its function is as follows. Catalyzes the reversible reaction in which hydroxymethyl group from 5,10-methylenetetrahydrofolate is transferred onto alpha-ketoisovalerate to form ketopantoate. This is 3-methyl-2-oxobutanoate hydroxymethyltransferase from Shouchella clausii (strain KSM-K16) (Alkalihalobacillus clausii).